Consider the following 522-residue polypeptide: L-tyrosine/L-DOPA decarboxylase 2 (522 aa).

Tandem repeats lie at residues 75-132 (KDVH…TELE) and 135-186 (VMDW…GREH). Residues 75 to 186 (KDVHDDIVPG…RILDRIGREH (112 aa)) form a 2 X approximate tandem repeats region. The pyridoxal 5'-phosphate site is built by Thr-163, Cys-164, Thr-258, and Asn-312. Lys-315 is subject to N6-(pyridoxal phosphate)lysine.

Belongs to the group II decarboxylase family. Pyridoxal 5'-phosphate is required as a cofactor. Strongly expressed in all tissues, particularly in thick roots.

The catalysed reaction is L-tyrosine + H(+) = tyramine + CO2. It carries out the reaction L-dopa + H(+) = dopamine + CO2. Its pathway is aromatic compound metabolism. The protein operates within alkaloid biosynthesis. Functionally, aromatic amino acid decarboxylase participating in the biosynthesis of natural products derived from phenylethylamine, including mescaline, a natural hallucinogen potentially used in psychotherapeutic treatments. Catalyzes the decarboxylation of L-tyrosine and L-DOPA. The protein is L-tyrosine/L-DOPA decarboxylase 2 of Lophophora williamsii (Peyote).